A 290-amino-acid polypeptide reads, in one-letter code: Lipoyl synthase (290 aa).

[4Fe-4S] cluster contacts are provided by Cys34, Cys39, Cys45, Cys60, Cys64, Cys67, and Ser273. The 217-residue stretch at 46–262 (WNKRHATVMI…KYIAYSKGFL (217 aa)) folds into the Radical SAM core domain.

The protein belongs to the radical SAM superfamily. Lipoyl synthase family. Requires [4Fe-4S] cluster as cofactor.

The protein resides in the cytoplasm. It catalyses the reaction [[Fe-S] cluster scaffold protein carrying a second [4Fe-4S](2+) cluster] + N(6)-octanoyl-L-lysyl-[protein] + 2 oxidized [2Fe-2S]-[ferredoxin] + 2 S-adenosyl-L-methionine + 4 H(+) = [[Fe-S] cluster scaffold protein] + N(6)-[(R)-dihydrolipoyl]-L-lysyl-[protein] + 4 Fe(3+) + 2 hydrogen sulfide + 2 5'-deoxyadenosine + 2 L-methionine + 2 reduced [2Fe-2S]-[ferredoxin]. The protein operates within protein modification; protein lipoylation via endogenous pathway; protein N(6)-(lipoyl)lysine from octanoyl-[acyl-carrier-protein]: step 2/2. In terms of biological role, catalyzes the radical-mediated insertion of two sulfur atoms into the C-6 and C-8 positions of the octanoyl moiety bound to the lipoyl domains of lipoate-dependent enzymes, thereby converting the octanoylated domains into lipoylated derivatives. The chain is Lipoyl synthase from Wolbachia pipientis subsp. Culex pipiens (strain wPip).